The following is a 130-amino-acid chain: B1 protein (130 aa).

The signal sequence occupies residues 1-12 (LTSLILLVAVQA). 2 disulfide bridges follow: C28–C59 and C99–C116.

This sequence belongs to the PBP/GOBP family. In terms of processing, N-glycosylated. In terms of tissue distribution, tubular accessory sex gland.

The protein resides in the secreted. Its function is as follows. May be a carrier protein for lipids. The polypeptide is B1 protein (Tenebrio molitor (Yellow mealworm beetle)).